We begin with the raw amino-acid sequence, 748 residues long: MADSSGQQGKGRRVQPQWSPPAGTQPCRLHLYNSLTRNKEVFIPQDGKKVTWYCCGPTVYDASHMGHARSYISFDILRRVLKDYFKFDVFYCMNITDIDDKIIKRARQNHLFEQYREKRPEAAQLLEDVQAALKPFSVKLNETTDPDKKQMLERIQHAVQLATEPLEKAVQSRLTGEEVNSCVEVLLEEAKDLLSDWLDSTLGCDVTDNSIFSKLPKFWEGDFHRDMEALNVLPPDVLTRVSEYVPEIVNFVQKIVDNGYGYVSNGSVYFDTAKFASSEKHSYGKLVPEAVGDQKALQEGEGDLSISADRLSEKRSPNDFALWKASKPGEPSWPCPWGKGRPGWHIECSAMAGTLLGASMDIHGGGFDLRFPHHDNELAQSEAYFENDCWVRYFLHTGHLTIAGCKMSKSLKNFITIKDALKKHSARQLRLAFLMHSWKDTLDYSSNTMESALQYEKFLNEFFLNVKDILRAPVDITGQFEKWGEEEAELNKNFYDKKTAIHKALCDNVDTRTVMEEMRALVSQCNLYMAARKAVRKRPNQALLENIALYLTHMLKIFGAVEEDSSLGFPVGGPGTSLSLEATVMPYLQVLSEFREGVRKIAREQKVPEILQLSDALRDNILPELGVRFEDHEGLPTVVKLVDRNTLLKEREEKRRVEEEKRKKKEEAARRKQEQEAAKLAKMKIPPSEMFLSETDKYSKFDENGLPTHDMEGKELSKGQAKKLKKLFEAQEKLYKEYLQMAQNGSFQ.

The tract at residues 1-25 (MADSSGQQGKGRRVQPQWSPPAGTQ) is disordered. The residue at position 2 (Ala2) is an N-acetylalanine. Residue Ser19 is modified to Phosphoserine. Cys55 contacts Zn(2+). Gly56 lines the L-cysteine pocket. The 'HIGH' region signature appears at 57–67 (PTVYDASHMGH). Position 79 is a phosphoserine (Arg79). Thr96 contacts L-cysteine. Residues 101-104 (KIIK) carry the 'KIIK' region motif. Phosphoserine occurs at positions 305 and 307. Cys348, His373, and Glu377 together coordinate Zn(2+). His373 lines the L-cysteine pocket. The 'KMSKS' region signature appears at 406–410 (KMSKS). Position 409 (Lys409) interacts with ATP. Lys503 carries the post-translational modification N6-acetyllysine. Positions 653-679 (EKRRVEEEKRKKKEEAARRKQEQEAAK) are enriched in basic and acidic residues. Residues 653 to 686 (EKRRVEEEKRKKKEEAARRKQEQEAAKLAKMKIP) are disordered. Ser746 carries the post-translational modification Phosphoserine.

It belongs to the class-I aminoacyl-tRNA synthetase family. As to quaternary structure, homodimer. The cofactor is Zn(2+).

It is found in the cytoplasm. The enzyme catalyses tRNA(Cys) + L-cysteine + ATP = L-cysteinyl-tRNA(Cys) + AMP + diphosphate. Catalyzes the ATP-dependent ligation of cysteine to tRNA(Cys). In Homo sapiens (Human), this protein is Cysteine--tRNA ligase, cytoplasmic.